Consider the following 422-residue polypeptide: Serine--tRNA ligase (422 aa).

Residue 231 to 233 (TGE) coordinates L-serine. Position 262–264 (262–264 (RQE)) interacts with ATP. Glu-285 is a binding site for L-serine. 349-352 (EISS) contacts ATP. Ser-384 contributes to the L-serine binding site.

This sequence belongs to the class-II aminoacyl-tRNA synthetase family. Type-1 seryl-tRNA synthetase subfamily. Homodimer. The tRNA molecule binds across the dimer.

The protein resides in the cytoplasm. The catalysed reaction is tRNA(Ser) + L-serine + ATP = L-seryl-tRNA(Ser) + AMP + diphosphate + H(+). The enzyme catalyses tRNA(Sec) + L-serine + ATP = L-seryl-tRNA(Sec) + AMP + diphosphate + H(+). The protein operates within aminoacyl-tRNA biosynthesis; selenocysteinyl-tRNA(Sec) biosynthesis; L-seryl-tRNA(Sec) from L-serine and tRNA(Sec): step 1/1. Functionally, catalyzes the attachment of serine to tRNA(Ser). Is also able to aminoacylate tRNA(Sec) with serine, to form the misacylated tRNA L-seryl-tRNA(Sec), which will be further converted into selenocysteinyl-tRNA(Sec). This Mesoplasma florum (strain ATCC 33453 / NBRC 100688 / NCTC 11704 / L1) (Acholeplasma florum) protein is Serine--tRNA ligase.